Here is a 462-residue protein sequence, read N- to C-terminus: MATEKTMEKIVSLAKSRGFIFPGSEIYGGLANTWDYGPLGVELKNNVKKAWWKKFIQQSPYNVGLDAAILMNPKTWEASGHIGGFSDPLMDCKKCRSRFRADKLIEDYMHSQNEETVVDGWSNQQMKTYIEEKEIVCPECGAKDFTDIRQFNLMFKTFQGVTEDSSTEIFLRPETAQGIFVNFKNVLRTSRKKVPFGIGQIGKSFRNEITPGNFTFRTREFEQMELEFFCKPGEDLEWFNYWKEFCKNWLLNLNLTEENLRIRDHAEEELSHYSKATTDFEYRFPFGWGELWGVADRTDFDLKQHSEHSGEDFTYQDPITNEKYVPYCIEPSVGVDRVALAFLVDAYDEEVIDEKDTRVVLRLHPALAPFKAAVLPLTKKLKDQALELYETLSENYMVDYDEAGSIGKRYRRHDEIGTPFCITFDYDSLEDQCVTIRHRDSMEQERIQISELTTYLNEKLKF.

Arginine 100 and glutamate 174 together coordinate substrate. Residues 206–208 (RNE), 216–221 (FRTREF), 290–291 (EL), and 334–337 (GVDR) contribute to the ATP site. 221–225 (FEQME) is a substrate binding site. Substrate is bound at residue 330–334 (EPSVG).

It belongs to the class-II aminoacyl-tRNA synthetase family. In terms of assembly, homodimer.

The protein resides in the cytoplasm. The catalysed reaction is tRNA(Gly) + glycine + ATP = glycyl-tRNA(Gly) + AMP + diphosphate. Its function is as follows. Catalyzes the attachment of glycine to tRNA(Gly). The sequence is that of Glycine--tRNA ligase from Alkaliphilus oremlandii (strain OhILAs) (Clostridium oremlandii (strain OhILAs)).